The following is a 442-amino-acid chain: L-seryl-tRNA(Sec) selenium transferase (442 aa).

K284 bears the N6-(pyridoxal phosphate)lysine mark.

It belongs to the SelA family. Requires pyridoxal 5'-phosphate as cofactor.

The protein localises to the cytoplasm. It catalyses the reaction L-seryl-tRNA(Sec) + selenophosphate + H(+) = L-selenocysteinyl-tRNA(Sec) + phosphate. The protein operates within aminoacyl-tRNA biosynthesis; selenocysteinyl-tRNA(Sec) biosynthesis; selenocysteinyl-tRNA(Sec) from L-seryl-tRNA(Sec) (bacterial route): step 1/1. Its function is as follows. Converts seryl-tRNA(Sec) to selenocysteinyl-tRNA(Sec) required for selenoprotein biosynthesis. In Campylobacter fetus subsp. fetus (strain 82-40), this protein is L-seryl-tRNA(Sec) selenium transferase.